Consider the following 185-residue polypeptide: Ribosome-recycling factor (185 aa).

Belongs to the RRF family.

It localises to the cytoplasm. Its function is as follows. Responsible for the release of ribosomes from messenger RNA at the termination of protein biosynthesis. May increase the efficiency of translation by recycling ribosomes from one round of translation to another. The sequence is that of Ribosome-recycling factor from Chromobacterium violaceum (strain ATCC 12472 / DSM 30191 / JCM 1249 / CCUG 213 / NBRC 12614 / NCIMB 9131 / NCTC 9757 / MK).